The primary structure comprises 151 residues: Putative transcriptional regulatory protein TK2151 (151 aa).

Belongs to the Tfx family.

Its function is as follows. Putative transcriptional regulator. This chain is Putative transcriptional regulatory protein TK2151, found in Thermococcus kodakarensis (strain ATCC BAA-918 / JCM 12380 / KOD1) (Pyrococcus kodakaraensis (strain KOD1)).